A 202-amino-acid chain; its full sequence is Glycerol-3-phosphate acyltransferase (202 aa).

A run of 4 helical transmembrane segments spans residues 2-22 (ANLL…AVVV), 82-102 (DTGL…PVFH), 119-139 (AIDP…AFFF), and 158-178 (VLMN…VLLI).

Belongs to the PlsY family. In terms of assembly, probably interacts with PlsX.

It localises to the cell inner membrane. The enzyme catalyses an acyl phosphate + sn-glycerol 3-phosphate = a 1-acyl-sn-glycero-3-phosphate + phosphate. The protein operates within lipid metabolism; phospholipid metabolism. Catalyzes the transfer of an acyl group from acyl-phosphate (acyl-PO(4)) to glycerol-3-phosphate (G3P) to form lysophosphatidic acid (LPA). This enzyme utilizes acyl-phosphate as fatty acyl donor, but not acyl-CoA or acyl-ACP. This is Glycerol-3-phosphate acyltransferase from Cupriavidus taiwanensis (strain DSM 17343 / BCRC 17206 / CCUG 44338 / CIP 107171 / LMG 19424 / R1) (Ralstonia taiwanensis (strain LMG 19424)).